A 145-amino-acid chain; its full sequence is Ribonuclease VapC7 (145 aa).

The PINc domain maps to 2–129 (IVLDTTVLVY…PAFADLSDVV (128 aa)). Residues D5 and D100 each contribute to the Mg(2+) site.

It belongs to the PINc/VapC protein family. Mg(2+) is required as a cofactor.

Toxic component of a type II toxin-antitoxin (TA) system. An RNase. The cognate antitoxin is VapB7. The polypeptide is Ribonuclease VapC7 (Mycobacterium tuberculosis (strain ATCC 25618 / H37Rv)).